The primary structure comprises 471 residues: Cysteine--tRNA ligase (471 aa).

Cys30 provides a ligand contact to Zn(2+). Residues 32 to 42 (PTVYNFAHIGN) carry the 'HIGH' region motif. Residues Cys212, His237, and Glu241 each coordinate Zn(2+). Positions 270 to 274 (KMSKS) match the 'KMSKS' region motif. Lys273 is a binding site for ATP.

The protein belongs to the class-I aminoacyl-tRNA synthetase family. In terms of assembly, monomer. It depends on Zn(2+) as a cofactor.

It localises to the cytoplasm. It catalyses the reaction tRNA(Cys) + L-cysteine + ATP = L-cysteinyl-tRNA(Cys) + AMP + diphosphate. This Leptospira interrogans serogroup Icterohaemorrhagiae serovar Lai (strain 56601) protein is Cysteine--tRNA ligase.